We begin with the raw amino-acid sequence, 61 residues long: Metallothionein-2B (61 aa).

The residue at position 1 (Met1) is an N-acetylmethionine. The beta stretch occupies residues 1–29 (MDPNCSCATGDSCTCASSCKCKECKCTSC). Cys5, Cys7, Cys13, Cys15, Cys19, Cys21, Cys24, Cys26, Cys29, Cys33, Cys34, Cys36, Cys37, Cys41, Cys44, Cys48, Cys50, Cys57, Cys59, and Cys60 together coordinate a divalent metal cation. The interval 30-61 (KKSCCSCCPAGCTKCAQGCICKGASDKCSCCA) is alpha.

Belongs to the metallothionein superfamily. Type 1 family. As to quaternary structure, monomer.

Metallothioneins have a high content of cysteine residues that bind various heavy metals; these proteins are transcriptionally regulated by both heavy metals and glucocorticoids. The protein is Metallothionein-2B of Oryctolagus cuniculus (Rabbit).